A 733-amino-acid polypeptide reads, in one-letter code: Polyribonucleotide nucleotidyltransferase (733 aa).

2 residues coordinate Mg(2+): Asp488 and Asp494. A KH domain is found at 555 to 614; sequence PRIEMMTIPVEKIREVIGSGGKVIREIVEQTGAKINIEDDGTIKIASPDTKSIETAKSWI. In terms of domain architecture, S1 motif spans 624 to 692; sequence GTIYQGTVVK…ERGKIRLSMK (69 aa). The disordered stretch occupies residues 698-733; the sequence is TGKEIPQDDLIKTEKEQNPDEKNKSEKKRHNRKKED. Over residues 702 to 721 the composition is skewed to basic and acidic residues; the sequence is IPQDDLIKTEKEQNPDEKNK. Residues 722-733 are compositionally biased toward basic residues; that stretch reads SEKKRHNRKKED.

This sequence belongs to the polyribonucleotide nucleotidyltransferase family. The cofactor is Mg(2+).

It localises to the cytoplasm. The enzyme catalyses RNA(n+1) + phosphate = RNA(n) + a ribonucleoside 5'-diphosphate. Involved in mRNA degradation. Catalyzes the phosphorolysis of single-stranded polyribonucleotides processively in the 3'- to 5'-direction. The sequence is that of Polyribonucleotide nucleotidyltransferase from Bartonella bacilliformis (strain ATCC 35685 / KC583 / Herrer 020/F12,63).